We begin with the raw amino-acid sequence, 350 residues long: Membrane progestin receptor alpha (350 aa).

Topologically, residues 1–80 are cytoplasmic; it reads MATMVAQKLS…HNEAVNVWTH (80 aa). Residues 81–101 form a helical membrane-spanning segment; the sequence is LLAALVLLLRLAIFVGTVDFW. Topologically, residues 102-105 are extracellular; that stretch reads GDPH. Residues 106 to 126 form a helical membrane-spanning segment; the sequence is ALPLFIIVLASFTYLSLSALA. Residues 127 to 139 lie on the Cytoplasmic side of the membrane; the sequence is HLLQAKSEFWHYS. The helical transmembrane segment at 140–160 threads the bilayer; sequence FFFLDYVGVAVYQFGSALAHF. Over 161–165 the chain is Extracellular; the sequence is YYAIE. Residues 166-186 traverse the membrane as a helical segment; it reads PAWHAQVQTIFLPMAAFLAWL. At 187–239 the chain is on the cytoplasmic side; sequence SCTGSCYNKYIQKPGLLGRTCQEVPSALAYALDISPVAHRILASPEPATDDPA. The helical transmembrane segment at 240–260 threads the bilayer; sequence LLYHKCQVVFFLLAAAFFSAF. Residues 261–278 lie on the Extracellular side of the membrane; it reads MPERWFPGSCHIFGQGHQ. Residues 279–299 form a helical membrane-spanning segment; that stretch reads LFHVFLVLCTLAQLEAVALDY. Residues 300–318 are Cytoplasmic-facing; that stretch reads EARRPIYEPLHTRWPHNFS. Residues 319 to 339 form a helical membrane-spanning segment; sequence GLFLLTVGSSILTAFLLSQLV. Topologically, residues 340–350 are extracellular; the sequence is RRKLDLDRKTQ.

It belongs to the ADIPOR family.

It localises to the cell membrane. Its function is as follows. Plasma membrane progesterone (P4) receptor coupled to G proteins. Seems to act through a G(i) mediated pathway. May be involved in oocyte maturation. Involved in neurosteroid inhibition of apoptosis. Also binds dehydroepiandrosterone (DHEA), pregnanolone, pregnenolone and allopregnanolone. This chain is Membrane progestin receptor alpha (PAQR7), found in Sus scrofa (Pig).